The sequence spans 773 residues: Molybdenum cofactor sulfurase (773 aa).

At K243 the chain carries N6-(pyridoxal phosphate)lysine. C410 is an active-site residue. The MOSC domain occupies L632–E773. S731 bears the Phosphoserine mark.

It belongs to the class-V pyridoxal-phosphate-dependent aminotransferase family. MOCOS subfamily. Pyridoxal 5'-phosphate serves as cofactor.

The catalysed reaction is Mo-molybdopterin + L-cysteine + AH2 = thio-Mo-molybdopterin + L-alanine + A + H2O. Its pathway is cofactor biosynthesis; molybdopterin biosynthesis. Sulfurates the molybdenum cofactor. Sulfation of molybdenum is essential for xanthine dehydrogenase (XDH) and aldehyde oxidase (ADO) enzymes in which molybdenum cofactor is liganded by 1 oxygen and 1 sulfur atom in active form. This chain is Molybdenum cofactor sulfurase, found in Drosophila ananassae (Fruit fly).